The chain runs to 683 residues: Glucosylceramidase (683 aa).

The active-site Proton donor is Glu-254. Residue Glu-483 is the Nucleophile of the active site.

It belongs to the glycosyl hydrolase 5 (cellulase A) family.

The protein resides in the membrane. It catalyses the reaction a beta-D-glucosyl-(1&lt;-&gt;1')-N-acylsphing-4-enine + H2O = an N-acylsphing-4-enine + D-glucose. Its activity is regulated as follows. Inhibited by metal cations Co(2+), Cu(2+), Ni(2+), Pb(2+) and Zn(2+). Not inhibited by metal chelator ethylenediaminetetraacetic acid (EDTA). Specifically hydrolyzes the glucosidic linkage in glucosylceramide. May prevent accumulation of aberrent glucosylceramide containing immature ceramide. The protein is Glucosylceramidase of Rhizopus delemar (strain RA 99-880 / ATCC MYA-4621 / FGSC 9543 / NRRL 43880) (Mucormycosis agent).